A 95-amino-acid chain; its full sequence is Co-chaperonin GroES (95 aa).

This sequence belongs to the GroES chaperonin family. In terms of assembly, heptamer of 7 subunits arranged in a ring. Interacts with the chaperonin GroEL.

It is found in the cytoplasm. In terms of biological role, together with the chaperonin GroEL, plays an essential role in assisting protein folding. The GroEL-GroES system forms a nano-cage that allows encapsulation of the non-native substrate proteins and provides a physical environment optimized to promote and accelerate protein folding. GroES binds to the apical surface of the GroEL ring, thereby capping the opening of the GroEL channel. The sequence is that of Co-chaperonin GroES from Nitratidesulfovibrio vulgaris (strain ATCC 29579 / DSM 644 / CCUG 34227 / NCIMB 8303 / VKM B-1760 / Hildenborough) (Desulfovibrio vulgaris).